Here is a 308-residue protein sequence, read N- to C-terminus: Porphobilinogen deaminase (308 aa).

The residue at position 241 (Cys-241) is an S-(dipyrrolylmethanemethyl)cysteine.

The protein belongs to the HMBS family. In terms of assembly, monomer. The cofactor is dipyrromethane.

It carries out the reaction 4 porphobilinogen + H2O = hydroxymethylbilane + 4 NH4(+). The protein operates within porphyrin-containing compound metabolism; protoporphyrin-IX biosynthesis; coproporphyrinogen-III from 5-aminolevulinate: step 2/4. Functionally, tetrapolymerization of the monopyrrole PBG into the hydroxymethylbilane pre-uroporphyrinogen in several discrete steps. This Staphylococcus aureus (strain bovine RF122 / ET3-1) protein is Porphobilinogen deaminase.